Consider the following 2262-residue polypeptide: MEMQQENETGREGVIPNSEKEVALISNQETEKAAMISGGKEGSVRDLESPNETATTQKIEHTTKPLKLDGIFAMPATPPNKAGLATKSASSSRSSSLKKQRRGSRGSANLNVAGMGDGAPKRSAPGGGQLNYGTNSVGNDLMKQSQSMTSLKASNEEQQESRDVIQAKLHLERPYNSLKKNSHSNKMHRYSWGSGNSQCSSTSLHSSATLGLGSSGKDDLWAAIQTNYNYIMDTNLLDTCKEARCEIEGAATVLEKSSECSFKMLDETQRPEGLCEDPKELRRSWREMENKLESSPTITELTLFGNAELQRHLAVHSVLYHEIASHARVVSSCIRAAEKEQQLQQQQQLSSQQPASLTSNCSSESTSESATKSSSLSSGFASDPVTTPIGTAAAAPPSSSTHPSKKGEGNLERLRDRYHLLYLKAFELQLCLDNLLRKRSSAANGLDDDEDEEEDTEDDSFGYEGEATEDDLNEVNSDLDLENSESKSATPAELILQRCQIAATQIVCGLDETQSQSRSQQVPSQAKSPSADQPRDCLAPQKPGDEADEELEEEDEDPDIGTDVVDFLIAKRSWRQVNHPNPSGTATLTDFEADSESSDFEQVQQLSRRGLPPTVGSTRRVLNLIEMPQSSNTNISSSNSLLQQRNHNIGNKMLPNKAHGKNIAVAVITPNSHGNTSHGHGLGHGLGHELNKSPLGLRKTRHHHNDTSKFNRSNRKSKNCAIFYFKHLDTDNEQGNAAGSDLQSEDDPSLIHRRRAGGDILKSADASTDDDDEGCLYTATAAATLEVATAATAAPTAAAATSSVDGLQSTAVSSTTATGGPLPPSDDSDKENKVALVSASTITAARTATATSIATLHSSNYDSSSACSSSNSNSNSNSNSNGRLTETSATSRVTQLQMQIHSQSQSQSQMELQINGNAIDGRHIISNNNCYSSMQHQPQNNNEGEAAEDLAKIKMGDDEAAADMANGNATKSQQMSNGVYSRADSCNFTVWAAETVASCHLPPRSPAKSAKSTKSQASNATVSGSTLVSPVKGKVSHDSIKQLVLKAEHLVRDAQETALKTPTKQKHSIIKISSTVKKREVTMPHPIKQRVEEWLEHQPSTPQLLTRSHTNELLPSCKPDDCEASGEASETDSVPQAGAGVNGGAPNGAGSDTSEGFTDSIATCMQTSTNSYGNSTERIGGSAEPIGQPVTPLGFGSSNQSLNVKIVKRSQTRRKSERPWSVSCLSQLTTDAAQLTTARIVENSPSGLASHSISESALDSLSPGPRPRAASSSGTGSNAAKKADSKGSLRRRKARKKRISAASAGRKSDSGSELGGDLTQTLMKSCESMSSQQLQEFTNALLSIQKGAVVAPLSPKGEVSGVPSLHDGEGGETQLMLPKFRVGSFTTAGLLATDTRLGALAALSNYMNEDEQQAELSTEDHHSSISETAWDNYQEKYNSENYSEGFDSDAARRLLEFGDDYRNFIDSQSDCCSSLSAANNLDSFSPPRMDSLQKHELKSLHINQDTITSSVDHARRQRALELQYERRRKTLEVRRKSCQDMDESLMASPQSDQQQQQLQVTPSLSASATALMTTPKNQSTSHQISHRAESVGRKLDFGGMSHSAQSLLRRTSESDTSTRRRRTVTADERRRSSRNLEKCIKLIPATTSSSSGSDSEDGEQEMRSLLQQSRDRLDDTRALKIRCHLLRPEDYNEIINTCRDNIRCLEAVLRGPPGTVLSNHCAGQTKDLLGAWEDLLSWSENASAARKLQQEMSVLKSSLQRLGDKPTPELLDTEPAIQIAVEALKLEQTQLTSYRTNMLRLNASVHSWLTKQERRLQSALEEQEQQQESEQLKQQKLVEEEKGADVQKELASTGAVAITVTDSNGNQVEALATGEASTSTPAWDVHSLMSSEQEFHKHLKNEVSDMYSAWDEADARINTQLEMLTNSLIAWRQLESGLSEFQLALGQDRGTLKGLEGALDKGQATPVELAQNVKLVAKLLSEKVHVSQEQLLAVQQHLDPNHIYHITKFTASNGSLSDSGISDGGATSDGGLSERERRLGVLRRLAKQLELALAPGSEAMRSIAARMESAEADLKHLQNTCRDLIVRTAASHQQKQQIQQNQTQQVSPKANGHIKKQAAKGKAEPQSPGRRGKGARKARQAKKAGEDQQVEEPSLSPEQQKMVLKQLKTLTSGDGGDDPSDDPSLLFNLESSEEDGEGADPAQTSKRGWAWRIARAAVPMQVALFTIFCAACLMQPNCCDNLNNLSMSFTPQLRYIRGPPPI.

Disordered regions lie at residues 1–140 (MEMQ…VGND), 345–410 (QQQQ…GEGN), 442–475 (AANG…LNEV), 514–561 (QSQS…PDIG), 800–832 (ATSS…DKEN), 859–898 (SNYD…QLQM), 1000–1031 (HLPP…VSPV), 1115–1157 (PSCK…SEGF), 1246–1316 (SGLA…ELGG), and 1533–1670 (VRRK…QQSR). The tract at residues 1–1774 (MEMQQENETG…KPTPELLDTE (1774 aa)) is required for apical microtubules localization. Over 1-2215 (MEMQQENETG…KRGWAWRIAR (2215 aa)) the chain is Cytoplasmic. Residues 58–67 (KIEHTTKPLK) show a composition bias toward basic and acidic residues. Over residues 131–140 (NYGTNSVGND) the composition is skewed to polar residues. The span at 345–402 (QQQQLSSQQPASLTSNCSSESTSESATKSSSLSSGFASDPVTTPIGTAAAAPPSSSTH) shows a compositional bias: low complexity. Residues 446-475 (LDDDEDEEEDTEDDSFGYEGEATEDDLNEV) are compositionally biased toward acidic residues. Positions 514–525 (QSQSRSQQVPSQ) are enriched in low complexity. Positions 546–560 (EADEELEEEDEDPDI) are enriched in acidic residues. Composition is skewed to low complexity over residues 809 to 818 (STAVSSTTAT) and 859 to 881 (SNYD…SNSN). Residues 882–894 (GRLTETSATSRVT) are compositionally biased toward polar residues. A compositionally biased stretch (low complexity) spans 1006–1018 (PAKSAKSTKSQAS). Positions 1019–1028 (NATVSGSTLV) are enriched in polar residues. Over residues 1246-1259 (SGLASHSISESALD) the composition is skewed to polar residues. Over residues 1267–1280 (PRAASSSGTGSNAA) the composition is skewed to low complexity. Residues 1288–1299 (SLRRRKARKKRI) show a composition bias toward basic residues. A compositionally biased stretch (low complexity) spans 1550–1559 (QSDQQQQQLQ). Residues 1560-1583 (VTPSLSASATALMTTPKNQSTSHQ) show a composition bias toward polar residues. 2 stretches are compositionally biased toward basic and acidic residues: residues 1586 to 1596 (HRAESVGRKLD) and 1610 to 1640 (RTSE…EKCI). Residues 1809–1842 (LTKQERRLQSALEEQEQQQESEQLKQQKLVEEEK) are a coiled coil. Residues 2092-2205 (HQQKQQIQQN…GEGADPAQTS (114 aa)) form a disordered region. Over residues 2093 to 2105 (QQKQQIQQNQTQQ) the composition is skewed to low complexity. The span at 2130–2142 (RRGKGARKARQAK) shows a compositional bias: basic residues. Residues 2207-2262 (RGWAWRIARAAVPMQVALFTIFCAACLMQPNCCDNLNNLSMSFTPQLRYIRGPPPI) enclose the KASH domain. A helical; Anchor for type IV membrane protein membrane pass occupies residues 2216–2236 (AAVPMQVALFTIFCAACLMQP). The Perinuclear space portion of the chain corresponds to 2237 to 2262 (NCCDNLNNLSMSFTPQLRYIRGPPPI).

It belongs to the nesprin family. Core component of LINC complexes which are composed of inner nuclear membrane SUN domain-containing proteins coupled to outer nuclear membrane KASH domain-containing nesprins. Interacts with kud. Interacts with Msp300; this interaction allows the anchoring of Msp300 nuclear ring structure to the nuclear envelope. Expressed ubiquitously in the eye disk, but at much higher levels posterior to the morphogenetic furrow. Expressed in R-cells and also in non-neural cone cells.

It localises to the cytoplasm. It is found in the cytoskeleton. The protein localises to the microtubule organizing center. The protein resides in the perinuclear region. Its subcellular location is the nucleus membrane. It localises to the nucleus envelope. In terms of biological role, component of the LINC (LInker of Nucleoskeleton and Cytoskeleton) complex involved in the connection between the nuclear lamina and the cytoskeleton. Plays a role in the nuclear positioning and links the nucleus to the microtubule organizing center (MTOC). Collaborates with Klar to promote even spacing of the myonuclei at the periphery of striated muscle fibers by mediating a tight association between a nuclear ring structure of Msp300 and the plus ends of a unique astral microtubule (MT) network. The polypeptide is Klarsicht protein (Drosophila melanogaster (Fruit fly)).